A 61-amino-acid chain; its full sequence is Small ribosomal subunit protein uS14 (61 aa).

The Zn(2+) site is built by Cys24, Cys27, Cys40, and Cys43.

This sequence belongs to the universal ribosomal protein uS14 family. Zinc-binding uS14 subfamily. In terms of assembly, part of the 30S ribosomal subunit. Contacts proteins S3 and S10. It depends on Zn(2+) as a cofactor.

In terms of biological role, binds 16S rRNA, required for the assembly of 30S particles and may also be responsible for determining the conformation of the 16S rRNA at the A site. This is Small ribosomal subunit protein uS14 from Bifidobacterium adolescentis (strain ATCC 15703 / DSM 20083 / NCTC 11814 / E194a).